A 115-amino-acid chain; its full sequence is Putative septation protein SpoVG (115 aa).

A disordered region spans residues 88 to 115 (PGTIATSEVSSQLEESDSDKTLSEDLKA). Over residues 91 to 100 (IATSEVSSQL) the composition is skewed to polar residues. Over residues 105–115 (SDKTLSEDLKA) the composition is skewed to basic and acidic residues.

Belongs to the SpoVG family.

Could be involved in septation. This chain is Putative septation protein SpoVG, found in Macrococcus caseolyticus (strain JCSC5402) (Macrococcoides caseolyticum).